Reading from the N-terminus, the 351-residue chain is UDP-3-O-acylglucosamine N-acyltransferase (351 aa).

Residue H240 is the Proton acceptor of the active site.

The protein belongs to the transferase hexapeptide repeat family. LpxD subfamily. Homotrimer.

It catalyses the reaction a UDP-3-O-[(3R)-3-hydroxyacyl]-alpha-D-glucosamine + a (3R)-hydroxyacyl-[ACP] = a UDP-2-N,3-O-bis[(3R)-3-hydroxyacyl]-alpha-D-glucosamine + holo-[ACP] + H(+). It functions in the pathway bacterial outer membrane biogenesis; LPS lipid A biosynthesis. Its function is as follows. Catalyzes the N-acylation of UDP-3-O-acylglucosamine using 3-hydroxyacyl-ACP as the acyl donor. Is involved in the biosynthesis of lipid A, a phosphorylated glycolipid that anchors the lipopolysaccharide to the outer membrane of the cell. The sequence is that of UDP-3-O-acylglucosamine N-acyltransferase from Pseudomonas fluorescens (strain Pf0-1).